We begin with the raw amino-acid sequence, 505 residues long: L-amino-acid oxidase (505 aa).

The signal sequence occupies residues methionine 1–cysteine 18. A disulfide bond links cysteine 28 and cysteine 191. FAD is bound by residues methionine 61 to serine 62, glutamate 81 to alanine 82, arginine 89, and glycine 105 to arginine 108. Residue arginine 108 coordinates substrate. A glycan (N-linked (GlcNAc...) asparagine) is linked at asparagine 190. Position 241 (histidine 241) interacts with substrate. Valine 279 provides a ligand contact to FAD. A disulfide bridge links cysteine 349 with cysteine 430. N-linked (GlcNAc...) asparagine glycosylation occurs at asparagine 379. Tyrosine 390 is a binding site for substrate. Residues glutamate 475 and glycine 482 to threonine 487 each bind FAD. Residue glycine 482–tryptophan 483 participates in substrate binding.

The protein belongs to the flavin monoamine oxidase family. FIG1 subfamily. As to quaternary structure, monomer. This is in contrast with most of its orthologs, that are non-covalently linked homodimers. It depends on FAD as a cofactor. Post-translationally, N-glycosylated. In terms of tissue distribution, expressed by the venom gland.

It is found in the secreted. It catalyses the reaction an L-alpha-amino acid + O2 + H2O = a 2-oxocarboxylate + H2O2 + NH4(+). The enzyme catalyses L-leucine + O2 + H2O = 4-methyl-2-oxopentanoate + H2O2 + NH4(+). In terms of biological role, catalyzes an oxidative deamination of predominantly hydrophobic and aromatic L-amino acids, thus producing hydrogen peroxide that may contribute to the diverse toxic effects of this enzyme. Shows activity on L-Leu. Exhibits diverse biological activities, such as hemorrhage, edema, antibacterial and antiparasitic activities, as well as regulation of platelet aggregation. Effects of snake L-amino oxidases on platelets are controversial, since they either induce aggregation or inhibit agonist-induced aggregation. These different effects are probably due to different experimental conditions. This protein has an ability to induce hemolysis and apoptosis. The chain is L-amino-acid oxidase from Protobothrops flavoviridis (Habu).